Here is a 582-residue protein sequence, read N- to C-terminus: ATP-dependent lipid A-core flippase (582 aa).

Helical transmembrane passes span 16-36 (LWPTIAPFKAGLIVAGIALIL), 64-84 (LLWMPLVVIGLMILRGITSYI), 153-173 (IIGLFIMMFYYSWQLSIILVV), 253-273 (PIIQLIASLALAFVLYAASFP), and 275-295 (VMDSLTAGTITVVFSSMIALM). One can recognise an ABC transmembrane type-1 domain in the interval 28–310 (IVAGIALILN…LTNVNAQFQR (283 aa)). The ABC transporter domain occupies 342 to 578 (LEFRNVTFTY…HGVYAQLHKM (237 aa)). 376 to 383 (GRSGSGKS) provides a ligand contact to ATP.

Belongs to the ABC transporter superfamily. Lipid exporter (TC 3.A.1.106) family. Homodimer.

The protein resides in the cell inner membrane. It catalyses the reaction ATP + H2O + lipid A-core oligosaccharideSide 1 = ADP + phosphate + lipid A-core oligosaccharideSide 2.. Functionally, involved in lipopolysaccharide (LPS) biosynthesis. Translocates lipid A-core from the inner to the outer leaflet of the inner membrane. Transmembrane domains (TMD) form a pore in the inner membrane and the ATP-binding domain (NBD) is responsible for energy generation. The sequence is that of ATP-dependent lipid A-core flippase from Salmonella paratyphi A (strain ATCC 9150 / SARB42).